Consider the following 1796-residue polypeptide: Non-reducing polyketide synthase nscA (1796 aa).

Positions 18 to 256 (DDLKDLFRRL…PLPVYDGLCH (239 aa)) are N-terminal acylcarrier protein transacylase domain (SAT). The Ketosynthase family 3 (KS3) domain maps to 392–825 (SSKLAIVGMA…GGNTTLLLED (434 aa)). Residues Cys-565, His-700, and His-743 each act as for beta-ketoacyl synthase activity in the active site. Residues 931–1251 (FTGQGAYYSG…SLVTLHLAGL (321 aa)) form a malonyl-CoA:ACP transacylase (MAT) domain region. The interval 1317-1636 (TSLVHQITAE…RLLMDRFFSP (320 aa)) is product template (PT) domain. The interval 1321–1457 (HQITAETVEA…ATVRFEDPVA (137 aa)) is N-terminal hotdog fold. The 311-residue stretch at 1321–1631 (HQITAETVEA…FRRVPRLLMD (311 aa)) folds into the PKS/mFAS DH domain. His-1353 (proton acceptor; for dehydratase activity) is an active-site residue. The tract at residues 1485–1631 (ASRLSKPLAY…FRRVPRLLMD (147 aa)) is C-terminal hotdog fold. The active-site Proton donor; for dehydratase activity is the Asp-1542. Residues 1688–1720 (TPESTPPLAPSSESSTPKESPIATPPESERADP) are disordered. Residues 1697 to 1708 (PSSESSTPKESP) are compositionally biased toward low complexity. A Carrier domain is found at 1719 to 1796 (DPMDNMVSQC…EMTAWIEEYC (78 aa)). O-(pantetheine 4'-phosphoryl)serine is present on Ser-1756.

Pantetheine 4'-phosphate serves as cofactor.

It functions in the pathway secondary metabolite biosynthesis. In terms of biological role, non-reducing polyketide synthase; part of the gene cluster that mediates the biosynthesis of neosartoricin B, a prenylated anthracenone that probably exhibits T-cell antiproliferative activity, suggestive of a physiological role as an immunosuppressive agent. The non-reducing polyketide synthase nscA probably synthesizes and cyclizes the decaketide backbone. The hydrolase nscB then mediates the product release through hydrolysis followed by spontaneous decarboxylation. The prenyltransferase nscD catalyzes the addition of the dimethylallyl group to the aromatic C5. The FAD-dependent monooxygenase nscC is then responsible for the stereospecific hydroxylation at C2. Neosartoricin B can be converted into two additional compounds neosartoricins C and D. Neosartoricin C is a spirocyclic compound that is cyclized through the attack of C3 hydroxyl on C14, followed by dehydration. On the other hand, neosartoricin D is a further cyclized compound in which attack of C2 on C14 in neosartoricin C results in the formation of the acetal-containing dioxabicyclo-octanone ring. Both of these compounds are novel and possibly represent related metabolites of the gene cluster. This is Non-reducing polyketide synthase nscA from Arthroderma otae (strain ATCC MYA-4605 / CBS 113480) (Microsporum canis).